Consider the following 219-residue polypeptide: Ribose-5-phosphate isomerase A (219 aa).

Substrate-binding positions include 28–31 (SGST), 81–84 (DGAD), and 94–97 (KGGG). The active-site Proton acceptor is the Glu-103. Residue Lys-121 coordinates substrate.

This sequence belongs to the ribose 5-phosphate isomerase family. In terms of assembly, homodimer.

It carries out the reaction aldehydo-D-ribose 5-phosphate = D-ribulose 5-phosphate. It functions in the pathway carbohydrate degradation; pentose phosphate pathway; D-ribose 5-phosphate from D-ribulose 5-phosphate (non-oxidative stage): step 1/1. Catalyzes the reversible conversion of ribose-5-phosphate to ribulose 5-phosphate. In Histophilus somni (strain 2336) (Haemophilus somnus), this protein is Ribose-5-phosphate isomerase A.